The following is a 410-amino-acid chain: Neuroserpin (410 aa).

The first 16 residues, 1–16 (MAYLGLLSLVALQSLV), serve as a signal peptide directing secretion. Residue serine 83 is modified to Phosphoserine. N-linked (GlcNAc...) asparagine glycans are attached at residues asparagine 157, asparagine 321, and asparagine 401. Serine 403 carries an O-linked (Xyl...) (chondroitin sulfate) serine glycan.

It belongs to the serpin family. In terms of tissue distribution, detected in adult pituitary and adrenal gland.

It localises to the secreted. The protein localises to the cytoplasmic vesicle. It is found in the secretory vesicle lumen. Its subcellular location is the perikaryon. Serine protease inhibitor that inhibits plasminogen activators and plasmin but not thrombin. May be involved in the formation or reorganization of synaptic connections as well as for synaptic plasticity in the adult nervous system. May protect neurons from cell damage by tissue-type plasminogen activator. This Rattus norvegicus (Rat) protein is Neuroserpin (Serpini1).